We begin with the raw amino-acid sequence, 82 residues long: MKLTCMMIVAVLFLTAWTVVTAEPHSSNVLENLYLKAHHEMENPEASKLNTRDDDCEPPGNFCGMIKIGPPCCSGWCFFACA.

The signal sequence occupies residues 1–22 (MKLTCMMIVAVLFLTAWTVVTA). Positions 23-52 (EPHSSNVLENLYLKAHHEMENPEASKLNTR) are excised as a propeptide. 3 cysteine pairs are disulfide-bonded: Cys56-Cys73, Cys63-Cys77, and Cys72-Cys81.

Expressed by the venom duct.

The protein resides in the secreted. In terms of biological role, omega-conotoxins act at presynaptic membranes, they bind and block voltage-gated calcium channels (Cav). Acts on high voltage-activated (HVA) calcium currents in molluscan neurons. The sequence is that of Omega-conotoxin PnVIB from Conus pennaceus (Feathered cone).